Reading from the N-terminus, the 1787-residue chain is Chitin synthase 5 (1787 aa).

The segment at 1–26 (MASRRMSMYSVTSEGMGGPRGAGQQS) is disordered. N-linked (GlcNAc...) asparagine glycosylation occurs at N164. Residues 345-367 (RIRDGDESSDGGRGARTPNSAED) form a disordered region. N643, N657, N668, and N695 each carry an N-linked (GlcNAc...) asparagine glycan. 2 helical membrane-spanning segments follow: residues 747–767 (MWVA…LRYV) and 783–803 (FVLC…IIFL). 2 N-linked (GlcNAc...) asparagine glycosylation sites follow: N894 and N1018. The helical transmembrane segment at 1055–1075 (FLLAFAIIMCAVILLKFVSAL) threads the bilayer. N1420 carries N-linked (GlcNAc...) asparagine glycosylation. The next 3 membrane-spanning stretches (helical) occupy residues 1445 to 1465 (FVVF…VYLG), 1478 to 1498 (FPLI…LIFI), and 1506 to 1526 (IGWM…LPIY). N-linked (GlcNAc...) asparagine glycosylation is present at N1533. Positions 1628–1657 (SPNSPAPYQHMSRSPTAYAGPTPYSDNPAA) are disordered. Positions 1729 to 1785 (GPDDFQIVDAIRAVLMEVDLDTVTKKQVRALVEQRLQTELVGERRTFLDRQIDNELA) constitute a DEK-C domain.

It belongs to the chitin synthase family. Class V subfamily.

Its subcellular location is the cell membrane. The enzyme catalyses [(1-&gt;4)-N-acetyl-beta-D-glucosaminyl](n) + UDP-N-acetyl-alpha-D-glucosamine = [(1-&gt;4)-N-acetyl-beta-D-glucosaminyl](n+1) + UDP + H(+). Its function is as follows. Polymerizes chitin, a structural polymer of the cell wall and septum, by transferring the sugar moiety of UDP-GlcNAc to the non-reducing end of the growing chitin polymer. May play a minor overlapping role with CHS6 in growth and differentiation. This is Chitin synthase 5 from Pyricularia oryzae (strain 70-15 / ATCC MYA-4617 / FGSC 8958) (Rice blast fungus).